The sequence spans 124 residues: Cytochrome c2 (124 aa).

Gln-1 carries the post-translational modification Pyrrolidone carboxylic acid. 4 residues coordinate heme c: Cys-16, Cys-19, His-20, and Met-85.

Belongs to the cytochrome c family. Binds 1 heme c group covalently per subunit.

It localises to the periplasm. In terms of biological role, cytochrome c2 is found mainly in purple, non-sulfur, photosynthetic bacteria where it functions as the electron donor to the oxidized bacteriochlorophyll in the photophosphorylation pathway. However, it may also have a role in the respiratory chain and is found in some non-photosynthetic bacteria. This chain is Cytochrome c2, found in Afifella marina (Rhodobium marinum).